The primary structure comprises 245 residues: 1-(5-phosphoribosyl)-5-[(5-phosphoribosylamino)methylideneamino] imidazole-4-carboxamide isomerase (245 aa).

Asp7 functions as the Proton acceptor in the catalytic mechanism. Asp129 (proton donor) is an active-site residue.

The protein belongs to the HisA/HisF family.

The protein localises to the cytoplasm. The catalysed reaction is 1-(5-phospho-beta-D-ribosyl)-5-[(5-phospho-beta-D-ribosylamino)methylideneamino]imidazole-4-carboxamide = 5-[(5-phospho-1-deoxy-D-ribulos-1-ylimino)methylamino]-1-(5-phospho-beta-D-ribosyl)imidazole-4-carboxamide. It functions in the pathway amino-acid biosynthesis; L-histidine biosynthesis; L-histidine from 5-phospho-alpha-D-ribose 1-diphosphate: step 4/9. This chain is 1-(5-phosphoribosyl)-5-[(5-phosphoribosylamino)methylideneamino] imidazole-4-carboxamide isomerase, found in Shewanella piezotolerans (strain WP3 / JCM 13877).